A 1246-amino-acid polypeptide reads, in one-letter code: Zinc finger protein 687a (1246 aa).

A compositionally biased stretch (basic and acidic residues) spans 24–47 (KEAIQSDTHGNHNEHSSVVGKERS). Residues 24–387 (KEAIQSDTHG…PTLVESASDA (364 aa)) form a disordered region. Polar residues-rich tracts occupy residues 88–111 (GEFS…SSVP) and 163–195 (AFTN…FSSK). Residues 287 to 301 (SSTNPTSLTSTNNLP) show a composition bias toward low complexity. The span at 302–317 (VEEKDLEHIIEERDSP) shows a compositional bias: basic and acidic residues. Over residues 326–338 (QSRTSLPSNSQGA) the composition is skewed to polar residues. 2 stretches are compositionally biased toward basic and acidic residues: residues 341–350 (SKQRITREEA) and 360–375 (MQEK…EGKS). The segment at 587–619 (YRCLECGDAFALERSLARHYDRRSMRIEVTCNH) adopts a C2H2-type 1 zinc-finger fold. The segment at 696 to 719 (HSCPECWSTFKGKQELVAHFQEVE) adopts a C2H2-type 2; degenerate zinc-finger fold. 3 consecutive C2H2-type zinc fingers follow at residues 817 to 840 (HKCP…ASQH), 854 to 876 (YKCV…IDTH), and 885 to 908 (FKCP…KDTH). Residues 907-953 (THRETSNHDGTSTQNSLVKMESSDGEEWGRDEEEDKGKVSDANSAVP) form a disordered region. Over residues 914–923 (HDGTSTQNSL) the composition is skewed to polar residues. Residues 929 to 940 (SDGEEWGRDEEE) show a composition bias toward acidic residues. 2 C2H2-type zinc fingers span residues 958 to 981 (WSCS…TEQH) and 988 to 1011 (FPCT…RVKH). The C2H2-type 8; degenerate zinc-finger motif lies at 1018–1044 (FYCQLCTGEKRSFSSKLILEKHIQAQH). The interval 1045–1093 (AGERGTATQSQAVPQFTDGADSSSEHDAGVLGGSSVEPESRLAESTLTR) is disordered. C2H2-type zinc fingers lie at residues 1137–1160 (AQCQ…FISH) and 1210–1232 (HICK…FRTH).

It belongs to the krueppel C2H2-type zinc-finger protein family. As to expression, widely expressed with highest levels in kidney, spleen and ovary.

It is found in the nucleus. May be involved in transcriptional regulation. This is Zinc finger protein 687a (znf687a) from Danio rerio (Zebrafish).